Consider the following 393-residue polypeptide: Glutamyl-tRNA reductase (393 aa).

Substrate contacts are provided by residues 47-50, Ser-98, 103-105, and Gln-109; these read TCSR and ETD. Cys-48 functions as the Nucleophile in the catalytic mechanism. 177–182 is an NADP(+) binding site; the sequence is GAGAVG.

It belongs to the glutamyl-tRNA reductase family. In terms of assembly, homodimer.

It catalyses the reaction (S)-4-amino-5-oxopentanoate + tRNA(Glu) + NADP(+) = L-glutamyl-tRNA(Glu) + NADPH + H(+). The protein operates within porphyrin-containing compound metabolism; protoporphyrin-IX biosynthesis; 5-aminolevulinate from L-glutamyl-tRNA(Glu): step 1/2. Its function is as follows. Catalyzes the NADPH-dependent reduction of glutamyl-tRNA(Glu) to glutamate 1-semialdehyde (GSA). The sequence is that of Glutamyl-tRNA reductase from Pyrobaculum neutrophilum (strain DSM 2338 / JCM 9278 / NBRC 100436 / V24Sta) (Thermoproteus neutrophilus).